The primary structure comprises 281 residues: Ras-related protein Rab-40C (281 aa).

GTP is bound by residues serine 23, glycine 26, lysine 27, and serine 46. The switch-I stretch occupies residues 41–49; sequence SPYAYSNGI. Residues serine 46 and aspartate 69 each contribute to the Mg(2+) site. Residues glycine 72, asparagine 126, and arginine 127 each contribute to the GTP site. The segment at 72–88 is switch-II; the sequence is GQGRFCTIFRSYSRGAQ. Positions 175 to 228 constitute an SOCS box domain; the sequence is LMRHGMEKIWRPNRVFSLQDLCCRAIVSCTPVHLIDKLPLPVTIKSHLKSFSMA. Positions 245 to 281 are disordered; the sequence is SGAGGGGSKGNSLKRSKSIRPPQSPPQNCSRSNCKIS. The span at 270-281 shows a compositional bias: polar residues; that stretch reads PQNCSRSNCKIS. A lipid anchor (S-palmitoyl cysteine) is attached at cysteine 273. A lipid anchor (S-geranylgeranyl cysteine) is attached at cysteine 278.

The protein belongs to the small GTPase superfamily. Rab family. As to quaternary structure, component of the cullin-5-RING E3 ubiquitin-protein ligase complex (ECS(RAB40C) complex) composed of CUL5, Elongin BC (ELOB and ELOC), RNF7/RBX2 and RAB40C. Interacts with protein phosphatase 6 (PP6) complex components ANKRD28, ANKRD52, PPP6C, PP6R1 and PP6R2; the interaction leads to ANKRD28 ubiquitination and decreased PP6 activity. Interacts with DAB2IP; DAB2IP acts as a GAP for RAB40C. Mg(2+) is required as a cofactor.

It is found in the cell membrane. Its subcellular location is the cytoplasm. It localises to the cytosol. The protein localises to the golgi apparatus membrane. The catalysed reaction is GTP + H2O = GDP + phosphate + H(+). The protein operates within protein modification; protein ubiquitination. Regulated by guanine nucleotide exchange factors (GEFs) which promote the exchange of bound GDP for free GTP. Regulated by GTPase activating proteins (GAPs) including DAB2IP, which increase the GTP hydrolysis activity. Inhibited by GDP dissociation inhibitors (GDIs). In terms of biological role, RAB40C small GTPase acts as substrate-recognition component of the ECS(RAB40C) E3 ubiquitin ligase complex which mediates the ubiquitination and subsequent proteasomal degradation of target proteins. The Rab40 subfamily belongs to the Rab family that are key regulators of intracellular membrane trafficking, from the formation of transport vesicles to their fusion with membranes. Rabs cycle between an inactive GDP-bound form and an active GTP-bound form that is able to recruit to membranes different sets of downstream effectors directly responsible for vesicle formation, movement, tethering and fusion. As part of the ECS(RAB40C) complex, mediates ANKRD28 ubiquitination and degradation, thereby inhibiting protein phosphatase 6 (PP6) complex activity and focal adhesion assembly during cell migration. Also negatively regulate lipid droplets accumulation in a GTP-dependent manner. The protein is Ras-related protein Rab-40C of Homo sapiens (Human).